The sequence spans 315 residues: Putative steroid dehydrogenase 2 (315 aa).

Residue 47 to 76 coordinates NADP(+); sequence ASWAVVTGATDGIGKSYSFELARRGFNVYI. Residue Tyr-202 is part of the active site.

This sequence belongs to the short-chain dehydrogenases/reductases (SDR) family. 17-beta-HSD 3 subfamily.

The chain is Putative steroid dehydrogenase 2 (stdh-2) from Caenorhabditis elegans.